A 404-amino-acid chain; its full sequence is Agnestins biosynthesis cluster transcription factor AgnL10 (404 aa).

A DNA-binding region (zn(2)-C6 fungal-type) is located at residues 23-50 (CNRCAVSKIKCSKEKPACARCAKQDKVC). Disordered stretches follow at residues 54-83 (ATKR…PTAA), 188-209 (ASAS…PSSG), and 294-318 (PGPD…AGVD). A compositionally biased stretch (basic residues) spans 57-68 (RAGRKRGSRRHN). Residues 74 to 83 (PTTQDLPTAA) show a composition bias toward polar residues. Positions 188–197 (ASASSMDPAA) are enriched in low complexity.

It localises to the nucleus. Its function is as follows. Transcription factor that regulates the expression of the gene cluster that mediates the biosynthesis of agnestins, dihydroxy-xanthone metabolites. The polypeptide is Agnestins biosynthesis cluster transcription factor AgnL10 (Paecilomyces divaricatus (Penicillium divaricatum)).